We begin with the raw amino-acid sequence, 351 residues long: dTDP-glucose 4,6-dehydratase (351 aa).

NAD(+) is bound by residues 12–13 (FI), 32–35 (DALT), 58–59 (DI), 80–84 (FAAES), and Thr-99. Substrate is bound at residue Ser-84. Thr-133 lines the substrate pocket. Asp-134 serves as the catalytic Proton donor. Catalysis depends on proton acceptor residues Glu-135 and Tyr-158. 158–162 (YSASK) serves as a coordination point for NAD(+). Residue Asn-187 participates in substrate binding. An NAD(+)-binding site is contributed by Asn-188. Substrate-binding positions include 197-198 (KL), 213-215 (PVY), Arg-222, Asn-257, and 289-293 (DRPGH).

Belongs to the NAD(P)-dependent epimerase/dehydratase family. dTDP-glucose dehydratase subfamily. In terms of assembly, homodimer. NAD(+) serves as cofactor.

The catalysed reaction is dTDP-alpha-D-glucose = dTDP-4-dehydro-6-deoxy-alpha-D-glucose + H2O. The protein operates within carbohydrate biosynthesis; dTDP-L-rhamnose biosynthesis. It participates in bacterial outer membrane biogenesis; LPS O-antigen biosynthesis. Its function is as follows. Catalyzes the dehydration of dTDP-D-glucose to form dTDP-6-deoxy-D-xylo-4-hexulose via a three-step process involving oxidation, dehydration and reduction. The chain is dTDP-glucose 4,6-dehydratase (rfbB) from Xanthomonas campestris pv. campestris (strain ATCC 33913 / DSM 3586 / NCPPB 528 / LMG 568 / P 25).